The chain runs to 375 residues: tRNA-specific 2-thiouridylase MnmA (375 aa).

ATP is bound by residues 12-19 and M38; that span reads GMSGGVDS. An interaction with target base in tRNA region spans residues 98 to 100; sequence NPD. C103 functions as the Nucleophile in the catalytic mechanism. A disulfide bond links C103 and C200. G127 lines the ATP pocket. Residues 150 to 152 are interaction with tRNA; it reads KDQ. C200 functions as the Cysteine persulfide intermediate in the catalytic mechanism. The tract at residues 312 to 313 is interaction with tRNA; that stretch reads RY.

This sequence belongs to the MnmA/TRMU family.

It localises to the cytoplasm. The catalysed reaction is S-sulfanyl-L-cysteinyl-[protein] + uridine(34) in tRNA + AH2 + ATP = 2-thiouridine(34) in tRNA + L-cysteinyl-[protein] + A + AMP + diphosphate + H(+). In terms of biological role, catalyzes the 2-thiolation of uridine at the wobble position (U34) of tRNA, leading to the formation of s(2)U34. The sequence is that of tRNA-specific 2-thiouridylase MnmA from Lactobacillus gasseri (strain ATCC 33323 / DSM 20243 / BCRC 14619 / CIP 102991 / JCM 1131 / KCTC 3163 / NCIMB 11718 / NCTC 13722 / AM63).